Here is an 877-residue protein sequence, read N- to C-terminus: Probable alpha/beta-glucosidase agdC (877 aa).

An N-terminal signal peptide occupies residues 1–14 (MLGSLLLLAPLAGA). Residues asparagine 171, asparagine 293, and asparagine 373 are each glycosylated (N-linked (GlcNAc...) asparagine). Aspartate 422 acts as the Nucleophile in catalysis. Glutamate 425 is an active-site residue. Residues 432-476 (DPCTDPERYSSENNLPPAPPPVRSSSPRPLPGFPADFQPSSASRS) are disordered. Positions 447–463 (PPAPPPVRSSSPRPLPG) are enriched in pro residues. The N-linked (GlcNAc...) asparagine glycan is linked to asparagine 508. Catalysis depends on aspartate 573, which acts as the Proton donor. Residues asparagine 574, asparagine 610, and asparagine 744 are each glycosylated (N-linked (GlcNAc...) asparagine).

This sequence belongs to the glycosyl hydrolase 31 family.

It is found in the secreted. The enzyme catalyses Hydrolysis of terminal, non-reducing (1-&gt;4)-linked alpha-D-glucose residues with release of alpha-D-glucose.. It catalyses the reaction Hydrolysis of terminal, non-reducing beta-D-glucosyl residues with release of beta-D-glucose.. Functionally, glucosidase involved in the degradation of cellulosic biomass. Has both alpha- and beta-glucosidase activity. This chain is Probable alpha/beta-glucosidase agdC (agdC), found in Aspergillus flavus (strain ATCC 200026 / FGSC A1120 / IAM 13836 / NRRL 3357 / JCM 12722 / SRRC 167).